The primary structure comprises 232 residues: tRNA1(Val) (adenine(37)-N6)-methyltransferase (232 aa).

Belongs to the methyltransferase superfamily. tRNA (adenine-N(6)-)-methyltransferase family.

It is found in the cytoplasm. It catalyses the reaction adenosine(37) in tRNA1(Val) + S-adenosyl-L-methionine = N(6)-methyladenosine(37) in tRNA1(Val) + S-adenosyl-L-homocysteine + H(+). Its function is as follows. Specifically methylates the adenine in position 37 of tRNA(1)(Val) (anticodon cmo5UAC). In Haemophilus influenzae (strain PittEE), this protein is tRNA1(Val) (adenine(37)-N6)-methyltransferase.